Here is a 309-residue protein sequence, read N- to C-terminus: Probable WRKY transcription factor 26 (309 aa).

The tract at residues Met1 to Ser24 is disordered. The segment at residues Ser111 to Pro176 is a DNA-binding region (WRKY 1). Zn(2+) is bound by residues Cys142, Cys147, His171, and His173. A disordered region spans residues Tyr167–Arg210. Residues Lys175–Gly196 show a composition bias toward polar residues. Residues Asp197–Arg210 show a composition bias toward basic and acidic residues. A DNA-binding region (WRKY 2) is located at residues Ser228–Pro293. Zn(2+)-binding residues include Cys259, Cys264, His288, and His290.

This sequence belongs to the WRKY group I family. Interacts with VQ10.

The protein localises to the nucleus. In terms of biological role, transcription factor. Interacts specifically with the W box (5'-(T)TGAC[CT]-3'), a frequently occurring elicitor-responsive cis-acting element. Functions with WRKY25 and WRKY33 as positive regulator of plant thermotolerance by partially participating in ethylene-response signal transduction pathway. This Arabidopsis thaliana (Mouse-ear cress) protein is Probable WRKY transcription factor 26 (WRKY26).